A 215-amino-acid chain; its full sequence is CASP-like protein 1E1 (215 aa).

Residues 1 to 51 (MESSRGKPGLNGSGGGAAAFDYSSRRGYYTGAGAALPPLAAGSRAPPVDPC) are Cytoplasmic-facing. The helical transmembrane segment at 52-72 (CVVLRVFVLLGTLASAVVMAA) threads the bilayer. At 73 to 103 (DRQSTTVQIAAGEELAPPLRVPVTAKWTYSS) the chain is on the extracellular side. The helical transmembrane segment at 104-124 (AFVYFVVANAMVFAFSAAALA) threads the bilayer. Residues 125–130 (AVRRRS) lie on the Cytoplasmic side of the membrane. A helical membrane pass occupies residues 131–151 (AVVPVMVGDLVAMALLFSAVG). At 152 to 185 (AAAQFGLLGERGNAHVRWAKVCDVYGPFCERAMA) the chain is on the extracellular side. A helical transmembrane segment spans residues 186–206 (AVVVALIAAFADLVLLMLTIL). At 207–215 (TIHKASSYY) the chain is on the cytoplasmic side.

Belongs to the Casparian strip membrane proteins (CASP) family. Homodimer and heterodimers.

Its subcellular location is the cell membrane. This Oryza sativa subsp. japonica (Rice) protein is CASP-like protein 1E1.